Here is a 434-residue protein sequence, read N- to C-terminus: Enolase (434 aa).

Ala41 lines the phosphoenolpyruvate pocket. Gln165 provides a ligand contact to (2R)-2-phosphoglycerate. Glu207 functions as the Proton donor in the catalytic mechanism. The Mg(2+) site is built by Asp244, Glu291, and Asp318. 4 residues coordinate phosphoenolpyruvate: Lys343, Arg372, Ser373, and Lys394. Residues Lys343, Arg372, Ser373, and Lys394 each coordinate (2R)-2-phosphoglycerate. Residue Lys343 is the Proton acceptor of the active site.

This sequence belongs to the enolase family. As to quaternary structure, homodimer and homooctamer; the homodimer is inactive. Mg(2+) is required as a cofactor.

The protein localises to the cytoplasm. It localises to the secreted. It is found in the cell surface. The enzyme catalyses (2R)-2-phosphoglycerate = phosphoenolpyruvate + H2O. The protein operates within carbohydrate degradation; glycolysis; pyruvate from D-glyceraldehyde 3-phosphate: step 4/5. Its function is as follows. Catalyzes the reversible conversion of 2-phosphoglycerate (2-PG) into phosphoenolpyruvate (PEP). It is essential for the degradation of carbohydrates via glycolysis. In terms of biological role, 'Moonlights' as a laminin receptor. Binds laminin when expressed on the bacterial cell surface; this probably induces destruction of the extracellular matrix, favoring invasion and dissemination. The protein is Enolase of Staphylococcus aureus.